The primary structure comprises 141 residues: Hemoglobin subunit alpha-1/2 (141 aa).

The Globin domain occupies 1 to 141 (VLSPTDKTNV…VSTVLTSKYR (141 aa)). Ser3 is subject to Phosphoserine. Lys7 carries the N6-succinyllysine modification. Thr8 is subject to Phosphothreonine. At Lys11 the chain carries N6-succinyllysine. Lys16 carries the post-translational modification N6-acetyllysine; alternate. N6-succinyllysine; alternate is present on Lys16. Tyr24 is subject to Phosphotyrosine. N6-succinyllysine is present on Lys40. Ser49 is subject to Phosphoserine. His58 is an O2 binding site. His87 is a heme b binding site. Phosphoserine is present on Ser102. The residue at position 108 (Thr108) is a Phosphothreonine. Ser124 carries the phosphoserine modification. Thr134 and Thr137 each carry phosphothreonine. Ser138 bears the Phosphoserine mark.

This sequence belongs to the globin family. Heterotetramer of two alpha chains and two beta chains. As to expression, red blood cells.

Its function is as follows. Involved in oxygen transport from the lung to the various peripheral tissues. The polypeptide is Hemoglobin subunit alpha-1/2 (Tapirus terrestris (Lowland tapir)).